A 1847-amino-acid polypeptide reads, in one-letter code: Peripheral-type benzodiazepine receptor-associated protein 1 (1847 aa).

3 disordered regions span residues 57 to 81, 282 to 318, and 560 to 626; these read EESS…GTET, NQRE…EDDV, and SGPK…DTAS. Composition is skewed to low complexity over residues 294 to 310 and 600 to 613; these read GSTA…GAPG and SLSN…IHNS. Residues 651–718 form the SH3 1 domain; sequence ARIQVFLARY…PSNFVERVSD (68 aa). A disordered region spans residues 728-787; sequence ELADSSHSSGPELSFLSGGGGGCSSGGQSSGGRSQPRPEEEATGDELSLSPPPEGLGEPL. Gly residues predominate over residues 744 to 757; it reads SGGGGGCSSGGQSS. Fibronectin type-III domains lie at 789–880, 882–974, and 979–1077; these read VPYP…AGAG, VPSQ…TLPA, and APLD…PALA. Disordered regions lie at residues 1107 to 1174, 1191 to 1215, 1240 to 1307, 1322 to 1478, and 1514 to 1616; these read LGYT…EGPD, DAGP…VCHR, NSLV…ILEQ, FSIP…ESSL, and PTDG…SHQD. Positions 1122–1133 are enriched in polar residues; sequence TQDSPASLSTEM. The segment covering 1203–1215 has biased composition (basic and acidic residues); that stretch reads LTQKEPSTEVCHR. Residues 1253 to 1266 are compositionally biased toward acidic residues; that stretch reads DIQEEEEEEEEEEE. Residues 1272–1284 are compositionally biased toward polar residues; sequence WSFQKQVAGNSIG. Composition is skewed to acidic residues over residues 1296 to 1305 and 1325 to 1335; these read CETDSDEEIL and PEEEEEEDEEE. A compositionally biased stretch (low complexity) spans 1340–1352; the sequence is PGPSSSSQDPSQP. 2 stretches are compositionally biased toward basic and acidic residues: residues 1412-1421 and 1546-1578; these read RPQDPREHCS and AWEK…ESRG. The SH3 2 domain occupies 1617–1685; it reads LPLRVFVALF…PCNMVAEVAV (69 aa). Disordered regions lie at residues 1701–1747 and 1818–1847; these read PPNV…PGPP and LEGP…RVQC. The 68-residue stretch at 1756–1823 folds into the SH3 3 domain; it reads KTSRPMVAAF…PSNFLEGPGP (68 aa).

It belongs to the RIMBP family. Interacts with RIMS1 and RIMS2. Interacts with TSPO. Interacts with CACNA1A. As to expression, specifically expressed in brain. High expression level in the limbic system such as the nucleus accumbens, septum, and hippocampus, as well as on the cerebellum and pineal gland. Abundant in the CA1 region of the hippocampus.

The protein localises to the cytoplasm. It is found in the mitochondrion. Functionally, required for synaptic transmission regulation. It probably controls the recruitement of voltage-gated calcium channels to the presynaptic membrane, and modulates neurotransmitter release. In Rattus norvegicus (Rat), this protein is Peripheral-type benzodiazepine receptor-associated protein 1.